A 163-amino-acid chain; its full sequence is MVLKTELCRFSGQKIYPGRGIRFIRSDSQVFLFLNSKCKRYFHNKLKPSKLAWTAMYRKQHKKDAAQEAVKRRRRATKKPYSRSIVGATLEVIQKKRAEKPEVRDAAREAALREIKERIKKTKDEKKAKKVEFASKQQKVKANFPKAAAASKGPKVGGGGGKR.

Residues 119 to 133 (IKKTKDEKKAKKVEF) are compositionally biased toward basic and acidic residues. The disordered stretch occupies residues 119 to 163 (IKKTKDEKKAKKVEFASKQQKVKANFPKAAAASKGPKVGGGGGKR).

This sequence belongs to the eukaryotic ribosomal protein eL24 family. In terms of assembly, interacts with REIL1 and REIL2. Component of the large ribosomal subunit. In terms of tissue distribution, ubiquitous.

It is found in the cytoplasm. Its subcellular location is the nucleus. The protein resides in the nucleolus. The protein localises to the nucleoplasm. Its function is as follows. Might have an extraribosomal function in reinitiation of translation of ETTIN and MONOPTEROS genes that are involved in the auxin-mediated gynoecium patterning. Essential in leaf polarity establishment, probably having a role for translation in leaf dorsoventral patterning to specify leaf adaxial identity. In Arabidopsis thaliana (Mouse-ear cress), this protein is Large ribosomal subunit protein eL24y.